The primary structure comprises 102 residues: Serum amyloid A-5 protein (102 aa).

The segment at 68 to 102 is disordered; it reads GRGHEDSMADQEANRWGRSGNDPNHYRPAGLPDKY. Basic and acidic residues predominate over residues 69-82; that stretch reads RGHEDSMADQEANR.

Belongs to the SAA family. In terms of tissue distribution, expressed by the liver; secreted in plasma.

The protein resides in the secreted. Functionally, major acute phase reactant. Apolipoprotein of the HDL complex. The protein is Serum amyloid A-5 protein of Mesocricetus auratus (Golden hamster).